We begin with the raw amino-acid sequence, 1771 residues long: Myosin-H heavy chain (1771 aa).

In terms of domain architecture, Myosin N-terminal SH3-like spans 7 to 57 (CGKEKVWVPNPEKGWINGDLIKEIPGEGWLVRDENGKEIKIEKDELRMQNP). The Myosin motor domain occupies 61 to 840 (EGIDDMTSLS…IIANLELLRS (780 aa)). 154–161 (GESGAGKT) serves as a coordination point for ATP. An actin-binding region spans residues 690–712 (LNSLMTTINSTNPHYIRCIKPNT). 3 IQ domains span residues 843-872 (MINS…SSIY), 866-895 (TKHS…ENSA), and 940-969 (RIKK…EAKS). Disordered regions lie at residues 1070–1176 (EKQH…NNVD), 1218–1282 (VKKS…PINM), and 1312–1343 (LNNG…KHIQ). Positions 1077–1111 (YKNNEVVGNTSFEGSTTTNNGVTSPPKSSPASPIR) are enriched in polar residues. Residues 1112 to 1139 (NSINSNSDTTISGSSDDSIDNTDSLILS) are compositionally biased toward low complexity. The segment covering 1143 to 1153 (HKGEDRKRNHE) has biased composition (basic and acidic residues). Positions 1180-1224 (RRQFNELEKEYKELKQMDETHKQYIESLKLQITQLEEKVKKSSSH) form a coiled coil. A compositionally biased stretch (low complexity) spans 1253–1281 (NSSSHHQQQQQQHNISPSNSITSTTSPIN). The Dilute domain occupies 1427–1695 (TGVLDPIETN…LTSLMDSPKY (269 aa)).

This sequence belongs to the TRAFAC class myosin-kinesin ATPase superfamily. Myosin family. As to quaternary structure, myosin I heavy chain is single-headed. Dimer of a heavy and a light chain. Inability to self-assemble into filaments.

Its function is as follows. Myosin is a protein that binds to actin and has ATPase activity that is activated by actin. This chain is Myosin-H heavy chain (myoH), found in Dictyostelium discoideum (Social amoeba).